Consider the following 490-residue polypeptide: Membrane-bound lytic murein transglycosylase F (490 aa).

Positions Met-1 to Ala-32 are cleaved as a signal peptide. Positions Pro-33–Val-269 are non-LT domain. The segment at Asp-270–Leu-490 is LT domain. Glu-316 is a catalytic residue. The tract at residues Ala-467 to Leu-490 is disordered.

The protein in the N-terminal section; belongs to the bacterial solute-binding protein 3 family. In the C-terminal section; belongs to the transglycosylase Slt family.

The protein localises to the cell outer membrane. The catalysed reaction is Exolytic cleavage of the (1-&gt;4)-beta-glycosidic linkage between N-acetylmuramic acid (MurNAc) and N-acetylglucosamine (GlcNAc) residues in peptidoglycan, from either the reducing or the non-reducing ends of the peptidoglycan chains, with concomitant formation of a 1,6-anhydrobond in the MurNAc residue.. Its function is as follows. Murein-degrading enzyme that degrades murein glycan strands and insoluble, high-molecular weight murein sacculi, with the concomitant formation of a 1,6-anhydromuramoyl product. Lytic transglycosylases (LTs) play an integral role in the metabolism of the peptidoglycan (PG) sacculus. Their lytic action creates space within the PG sacculus to allow for its expansion as well as for the insertion of various structures such as secretion systems and flagella. This is Membrane-bound lytic murein transglycosylase F from Pseudomonas paraeruginosa (strain DSM 24068 / PA7) (Pseudomonas aeruginosa (strain PA7)).